We begin with the raw amino-acid sequence, 436 residues long: 3-ketoacyl-CoA thiolase (436 aa).

Residue Cys99 is the Acyl-thioester intermediate of the active site. Residues His392 and Cys422 each act as proton acceptor in the active site.

This sequence belongs to the thiolase-like superfamily. Thiolase family. Heterotetramer of two alpha chains (FadJ) and two beta chains (FadI).

Its subcellular location is the cytoplasm. The enzyme catalyses an acyl-CoA + acetyl-CoA = a 3-oxoacyl-CoA + CoA. Its pathway is lipid metabolism; fatty acid beta-oxidation. Its function is as follows. Catalyzes the final step of fatty acid oxidation in which acetyl-CoA is released and the CoA ester of a fatty acid two carbons shorter is formed. In Salmonella paratyphi A (strain ATCC 9150 / SARB42), this protein is 3-ketoacyl-CoA thiolase.